The sequence spans 189 residues: Segregation and condensation protein B (189 aa).

This sequence belongs to the ScpB family. Homodimer. Homodimerization may be required to stabilize the binding of ScpA to the Smc head domains. Component of a cohesin-like complex composed of ScpA, ScpB and the Smc homodimer, in which ScpA and ScpB bind to the head domain of Smc. The presence of the three proteins is required for the association of the complex with DNA.

The protein resides in the cytoplasm. Its function is as follows. Participates in chromosomal partition during cell division. May act via the formation of a condensin-like complex containing Smc and ScpA that pull DNA away from mid-cell into both cell halves. The polypeptide is Segregation and condensation protein B (Clostridium tetani (strain Massachusetts / E88)).